A 267-amino-acid polypeptide reads, in one-letter code: MADS-box transcription factor 15 (267 aa).

One can recognise an MADS-box domain in the interval 1-61 (MGRGKVQLKR…GKLYEYATDS (61 aa)). One can recognise a K-box domain in the interval 88–178 (EGNWCHEYRK…QKELVERQKN (91 aa)). The tract at residues 179-215 (VRGQQQVGQWDQTQVQAQAQAQPQAQTSSSSSSMLRD) is disordered. Positions 182–215 (QQQVGQWDQTQVQAQAQAQPQAQTSSSSSSMLRD) are enriched in low complexity.

May interact with the K-box of MADS1 and MADS6.

The protein resides in the nucleus. In terms of biological role, probable transcription factor. The polypeptide is MADS-box transcription factor 15 (MADS15) (Oryza sativa subsp. japonica (Rice)).